Here is a 566-residue protein sequence, read N- to C-terminus: Putative ABC transporter ATP-binding protein lp_0149 (566 aa).

ABC transporter domains lie at Ile-6–Glu-247 and Leu-302–Ala-536. Residues Gly-40 to Ser-47 and Gly-335 to Ser-342 contribute to the ATP site.

This sequence belongs to the ABC transporter superfamily.

The protein resides in the cell membrane. Its function is as follows. Probably part of an ABC transporter complex. Responsible for energy coupling to the transport system. The protein is Putative ABC transporter ATP-binding protein lp_0149 of Lactiplantibacillus plantarum (strain ATCC BAA-793 / NCIMB 8826 / WCFS1) (Lactobacillus plantarum).